Here is a 355-residue protein sequence, read N- to C-terminus: Endonuclease III homolog (355 aa).

Positions 44 to 50 match the Nuclear localization signal motif; sequence PKKFRFQ. The HhH domain occupies 122–149; that stretch reads FQGDIPDTVEDLMTLPGVGPKMGYLCMS. Residue lysine 142 is the Nucleophile; for N-glycosylase activity of the active site. Cysteine 210, cysteine 217, cysteine 220, and cysteine 228 together coordinate [4Fe-4S] cluster. The short motif at 252–255 is the Nuclear localization signal element; it reads KKRP. Residues 303 to 355 are disordered; it reads KEPAADIDVDQKPPVAFHSTTKETRSLRRSKRVAKKSSQYFSQQSLQDIEDLV. The segment covering 338-349 has biased composition (polar residues); it reads KSSQYFSQQSLQ.

This sequence belongs to the Nth/MutY family. Requires [4Fe-4S] cluster as cofactor.

The protein localises to the nucleus. The protein resides in the mitochondrion. It catalyses the reaction 2'-deoxyribonucleotide-(2'-deoxyribose 5'-phosphate)-2'-deoxyribonucleotide-DNA = a 3'-end 2'-deoxyribonucleotide-(2,3-dehydro-2,3-deoxyribose 5'-phosphate)-DNA + a 5'-end 5'-phospho-2'-deoxyribonucleoside-DNA + H(+). Bifunctional DNA N-glycosylase with associated apurinic/apyrimidinic (AP) lyase function that catalyzes the first step in base excision repair (BER), the primary repair pathway for the repair of oxidative DNA damage. The DNA N-glycosylase activity releases the damaged DNA base from DNA by cleaving the N-glycosidic bond, leaving an AP site. The AP-lyase activity cleaves the phosphodiester bond 3' to the AP site by a beta-elimination. Primarily recognizes and repairs oxidative base damage of pyrimidines. Also has 8-oxo-7,8-dihydroguanine (8-oxoG) DNA glycosylase activity. Also involved in the repair of 7-methylguanine lesions, although it cannot directly repair alkylated DNA bases. Probably does so via excision of methylformamidopyrimidine (mFapy) lesions, a spontaneous processing product of 7-methylguanine. The sequence is that of Endonuclease III homolog (nth1) from Schizosaccharomyces pombe (strain 972 / ATCC 24843) (Fission yeast).